The primary structure comprises 324 residues: ATP synthase mitochondrial F1 complex assembly factor 1 (324 aa).

The N-terminal 54 residues, 1–54 (MAAVVSAAGGACPAVLQVAGLYRGLCAVRSRALGLGFVSPAQLRVFPVRRGSGL), are a transit peptide targeting the mitochondrion.

The protein belongs to the ATP11 family. As to quaternary structure, interacts with ATP5F1B; involved in the assembly of the F1 component of the mitochondrial ATP synthase (ATPase). In terms of tissue distribution, widely expressed but with low level.

The protein localises to the mitochondrion inner membrane. Functionally, has a complex stabilizing activity in the assembly of the mitochondrial F1-F0 complex. This Mus musculus (Mouse) protein is ATP synthase mitochondrial F1 complex assembly factor 1.